Reading from the N-terminus, the 614-residue chain is DNA mismatch repair protein MutL (614 aa).

This sequence belongs to the DNA mismatch repair MutL/HexB family.

This protein is involved in the repair of mismatches in DNA. It is required for dam-dependent methyl-directed DNA mismatch repair. May act as a 'molecular matchmaker', a protein that promotes the formation of a stable complex between two or more DNA-binding proteins in an ATP-dependent manner without itself being part of a final effector complex. The sequence is that of DNA mismatch repair protein MutL from Thermoanaerobacter sp. (strain X514).